A 1510-amino-acid chain; its full sequence is ABC transporter C family MRP4 (1510 aa).

12 helical membrane-spanning segments follow: residues 12 to 32 (EAVAATAHAALLALAALLLLL), 55 to 75 (PAVVVGDGAGGALAAATAGAW), 78 to 98 (AVLASCAYALLSQVAVLSYEV), 109 to 129 (ALLLPAVQAVSWAALLALALQ), 138 to 158 (FPALVRLWWVVSFALCVVIAY), 177 to 197 (MVANFASVPALGFLCLVGVMG), 319 to 339 (TFAAVNTIVSYVGPYLISYFV), 342 to 362 (LSGNIAFPHEGYILASIFFVA), 373 to 393 (WYLGVDIMGIHVKSGLTAMVY), 427 to 447 (AWYFHDIWMLPLQIILALAIL), 453 to 473 (IAMVSTLVATVLSIAASVPVA), and 540 to 560 (FVFWSSPIFVAVITFGTCILL). The ABC transmembrane type-1 1 domain maps to 320 to 595 (FAAVNTIVSY…FPDLISMMAQ (276 aa)). One can recognise an ABC transporter 1 domain in the interval 629–852 (VDIKDGAFSW…GTDFNALVSA (224 aa)). Residue 664-671 (GVIGSGKS) participates in ATP binding. Residues 889–925 (LKNKMCENGQPSNTRGIKEKKKKEERKKKRTVQEEER) form a disordered region. Basic residues predominate over residues 906–918 (KEKKKKEERKKKR). The next 6 membrane-spanning stretches (helical) occupy residues 945–965 (GTLIPLIILAQTMFQVLQIAS), 985–1005 (SVVLLVVYMSLAFGSSLFVFM), 1060–1082 (IAFRLGGFASTTIQLLGIVAVMS), 1086–1108 (WQVLILIVPMAVACMWMQRYYIA), 1154–1174 (LLDCFARPLFSSLAAIEWLCL), and 1179–1199 (LSTFVFAFCMAILVSFPPGTI). Residues 950–1220 (LIILAQTMFQ…GLNLNARMSR (271 aa)) form the ABC transmembrane type-1 2 domain. Residues 1267–1501 (IELIDLKVRY…KSSMFIQLVS (235 aa)) enclose the ABC transporter 2 domain. Residue 1301 to 1308 (GRTGSGKS) participates in ATP binding.

Belongs to the ABC transporter superfamily. ABCC family. Conjugate transporter (TC 3.A.1.208) subfamily. As to expression, expressed in roots, leaves, stalks, tassels, silks, developing seeds and developing embryos.

Its subcellular location is the membrane. Its function is as follows. ABC transporter that may affect phytic acid transport and compartmentalization. May function directly or indirectly in removing phytic acid from the cytosol or in vesicle trafficking. Required for phytic acid accumulation in developing seeds. Phytic acid is the primary storage form of phosphorus in cereal grains and other plant seeds. This Zea mays (Maize) protein is ABC transporter C family MRP4.